Here is a 297-residue protein sequence, read N- to C-terminus: Protoheme IX farnesyltransferase 1 (297 aa).

The next 9 membrane-spanning stretches (helical) occupy residues 23-43, 45-65, 93-113, 117-137, 145-165, 171-191, 216-236, 241-261, and 277-297; these read VVVLMLITSLAGMFLATRAGV, WSVLLFGNLGIGLCAGGAAVV, LPALLFALALALLGMVLLLVF, LTAWLTLASLLGYAVLYTGFL, IVIGGLAGAAPPLLGWVAVSG, PLLLVLIIFAWTPPHFWALAI, LHILLYTLILLAVSLLPYAIH, LYLACALGLGLRFLHWAWVLY, and IGYLFALFIALLLDHYLLLSL.

This sequence belongs to the UbiA prenyltransferase family. Protoheme IX farnesyltransferase subfamily.

The protein resides in the cell inner membrane. It catalyses the reaction heme b + (2E,6E)-farnesyl diphosphate + H2O = Fe(II)-heme o + diphosphate. It participates in porphyrin-containing compound metabolism; heme O biosynthesis; heme O from protoheme: step 1/1. Functionally, converts heme B (protoheme IX) to heme O by substitution of the vinyl group on carbon 2 of heme B porphyrin ring with a hydroxyethyl farnesyl side group. The polypeptide is Protoheme IX farnesyltransferase 1 (Pseudomonas putida (strain ATCC 700007 / DSM 6899 / JCM 31910 / BCRC 17059 / LMG 24140 / F1)).